The chain runs to 166 residues: Small ribosomal subunit protein uS5 (166 aa).

Positions 11 to 74 (LQEKLIAVNR…EKARRNMINV (64 aa)) constitute an S5 DRBM domain.

Belongs to the universal ribosomal protein uS5 family. Part of the 30S ribosomal subunit. Contacts proteins S4 and S8.

With S4 and S12 plays an important role in translational accuracy. Its function is as follows. Located at the back of the 30S subunit body where it stabilizes the conformation of the head with respect to the body. The chain is Small ribosomal subunit protein uS5 from Actinobacillus succinogenes (strain ATCC 55618 / DSM 22257 / CCUG 43843 / 130Z).